The following is a 162-amino-acid chain: Protein A49 (162 aa).

It belongs to the poxviridae A49 protein family.

This chain is Protein A49, found in Homo sapiens (Human).